Consider the following 255-residue polypeptide: 4-hydroxy-tetrahydrodipicolinate reductase (255 aa).

NAD(+) contacts are provided by residues 9 to 14, 89 to 91, and 115 to 118; these read GFKGKM, GTT, and APNF. His145 serves as the catalytic Proton donor/acceptor. His146 contributes to the (S)-2,3,4,5-tetrahydrodipicolinate binding site. The active-site Proton donor is Lys149. 155 to 156 serves as a coordination point for (S)-2,3,4,5-tetrahydrodipicolinate; the sequence is GT.

Belongs to the DapB family.

It is found in the cytoplasm. It catalyses the reaction (S)-2,3,4,5-tetrahydrodipicolinate + NAD(+) + H2O = (2S,4S)-4-hydroxy-2,3,4,5-tetrahydrodipicolinate + NADH + H(+). The catalysed reaction is (S)-2,3,4,5-tetrahydrodipicolinate + NADP(+) + H2O = (2S,4S)-4-hydroxy-2,3,4,5-tetrahydrodipicolinate + NADPH + H(+). Its pathway is amino-acid biosynthesis; L-lysine biosynthesis via DAP pathway; (S)-tetrahydrodipicolinate from L-aspartate: step 4/4. Functionally, catalyzes the conversion of 4-hydroxy-tetrahydrodipicolinate (HTPA) to tetrahydrodipicolinate. This chain is 4-hydroxy-tetrahydrodipicolinate reductase, found in Streptococcus sanguinis (strain SK36).